Here is a 239-residue protein sequence, read N- to C-terminus: Norbelladine 4'-O-methyltransferase 3 (239 aa).

S-adenosyl-L-methionine is bound by residues Val55, Glu77, 79–80 (GV), Ser85, Asp103, and Ala132. Asp155 serves as a coordination point for a divalent metal cation. Residue Asp157 participates in S-adenosyl-L-methionine binding. 2 residues coordinate a divalent metal cation: Asp181 and Asn182.

It belongs to the class I-like SAM-binding methyltransferase superfamily. Cation-dependent O-methyltransferase family. Requires Mg(2+) as cofactor.

The enzyme catalyses norbelladine + S-adenosyl-L-methionine = 4'-O-methylnorbelladine + S-adenosyl-L-homocysteine + H(+). It participates in alkaloid biosynthesis. In terms of biological role, 4'-O-methyltransferase converting norbelladine to 4'-O-methylnorbelladine. 4'-O-methylnorbelladine is a precursor to all Amaryllidaceae alkaloids such as galanthamine, lycorine and haemanthamine, and including haemanthamine- and crinamine-type alkaloids, promising anticancer agents. The sequence is that of Norbelladine 4'-O-methyltransferase 3 from Narcissus aff. pseudonarcissus MK-2014 (Daffodil).